A 217-amino-acid polypeptide reads, in one-letter code: Holliday junction branch migration complex subunit RuvA (217 aa).

Residues 1-64 (MIGKLTGILD…EDAIRLFGFE (64 aa)) form a domain I region. A domain II region spans residues 65–145 (TKVEQDWFCL…NAPHQSMPHF (81 aa)). Residues 146 to 160 (VSYSSETSSQAGTQH) are flexible linker. Residues 161-217 (TGHQHSMDALAALTKLGFERDQATHALQEAIKAFEGETPSSALLIRHSLKLLSSHLK) are domain III.

This sequence belongs to the RuvA family. Homotetramer. Forms an RuvA(8)-RuvB(12)-Holliday junction (HJ) complex. HJ DNA is sandwiched between 2 RuvA tetramers; dsDNA enters through RuvA and exits via RuvB. An RuvB hexamer assembles on each DNA strand where it exits the tetramer. Each RuvB hexamer is contacted by two RuvA subunits (via domain III) on 2 adjacent RuvB subunits; this complex drives branch migration. In the full resolvosome a probable DNA-RuvA(4)-RuvB(12)-RuvC(2) complex forms which resolves the HJ.

The protein resides in the cytoplasm. Its function is as follows. The RuvA-RuvB-RuvC complex processes Holliday junction (HJ) DNA during genetic recombination and DNA repair, while the RuvA-RuvB complex plays an important role in the rescue of blocked DNA replication forks via replication fork reversal (RFR). RuvA specifically binds to HJ cruciform DNA, conferring on it an open structure. The RuvB hexamer acts as an ATP-dependent pump, pulling dsDNA into and through the RuvAB complex. HJ branch migration allows RuvC to scan DNA until it finds its consensus sequence, where it cleaves and resolves the cruciform DNA. In Bartonella bacilliformis (strain ATCC 35685 / KC583 / Herrer 020/F12,63), this protein is Holliday junction branch migration complex subunit RuvA.